Here is a 451-residue protein sequence, read N- to C-terminus: V-type proton ATPase subunit S1 (451 aa).

A signal peptide spans 1 to 16 (MRVLFAVFSLIMACQA). Topologically, residues 17-407 (YDAVLFSNSR…DCTGTFSSGS (391 aa)) are lumenal. Asn-191, Asn-235, Asn-249, and Asn-330 each carry an N-linked (GlcNAc...) asparagine glycan. The helical transmembrane segment at 408–428 (WMGIVSALVLIAGLMFGYVML) threads the bilayer. At 429–451 (QSVQTMDRFDDPKQRQIVINVRE) the chain is on the cytoplasmic side.

Belongs to the vacuolar ATPase subunit S1 family. In terms of assembly, accessory component of the multisubunit proton-transporting vacuolar (V)-ATPase protein pump. As to expression, expressed in pharynx, hypodermis, intestine, vulval hypodermis and the H-shape excretory cell.

It localises to the membrane. Accessory subunit of the proton-transporting vacuolar (V)-ATPase protein pump, which is required for luminal acidification of secretory vesicles. In the germline, required for the trafficking of the receptor RME-2 to the oocyte cell membrane where it regulates the uptake of yolk proteins. Also, plays an essential role in osmoregulation in the embryo, probably by regulating the proper formation of the eggshell. This Caenorhabditis elegans protein is V-type proton ATPase subunit S1.